The sequence spans 133 residues: MPPKTRGAVRKPRKKDKKNIALGQAHIKSTFNNTIVSITDPTGAVISWASSGEVGFKGSRKSTPFAAQMAAEAAAKRAQEHGMRKVDVFVKGPGSGRETAIRSLQAAGLEVGSIQDVTPAAHNGCRPPKRRRV.

The disordered stretch occupies residues 1–23; that stretch reads MPPKTRGAVRKPRKKDKKNIALG. Positions 7-17 are enriched in basic residues; it reads GAVRKPRKKDK.

Belongs to the universal ribosomal protein uS11 family. Part of the 30S ribosomal subunit. Interacts with proteins S7 and S18. Binds to IF-3.

In terms of biological role, located on the platform of the 30S subunit, it bridges several disparate RNA helices of the 16S rRNA. Forms part of the Shine-Dalgarno cleft in the 70S ribosome. The polypeptide is Small ribosomal subunit protein uS11 (Pseudarthrobacter chlorophenolicus (strain ATCC 700700 / DSM 12829 / CIP 107037 / JCM 12360 / KCTC 9906 / NCIMB 13794 / A6) (Arthrobacter chlorophenolicus)).